Consider the following 278-residue polypeptide: HTH-type transcriptional activator RhaS (278 aa).

The region spanning 174 to 272 (NQLMAWLEDH…SWSPREIRQG (99 aa)) is the HTH araC/xylS-type domain. DNA-binding regions (H-T-H motif) lie at residues 191 to 212 (ETVADVFSLSLRTLHRQLKQHT) and 239 to 262 (VTDIAYRCGFGDSNHFSTLFRREF).

As to quaternary structure, binds DNA as a dimer.

The protein localises to the cytoplasm. Activates expression of the rhaBAD and rhaT operons. The polypeptide is HTH-type transcriptional activator RhaS (Enterobacter sp. (strain 638)).